The chain runs to 1404 residues: Probable GPI-anchored adhesin-like protein PGA55 (1404 aa).

An N-terminal signal peptide occupies residues 1 to 19 (MVLLCKYKVSWVFVLSVAG). Repeat copies occupy residues 104-109 (VSSSSS), 136-141 (VSSSSE), 156-161 (VSSSSK), 162-167 (VSSSSE), 183-188 (VSSSSQ), 196-201 (VSSSSE), 203-208 (VSSSSE), 209-214 (VSSSSE), 216-221 (VSSSSE), 222-227 (VSSSSE), 228-233 (VSSSSE), 234-239 (VSSSSQ), 247-252 (VSSSSE), 253-258 (VSSSSS), 261-266 (VSSSSE), 267-272 (VSSSSE), 274-279 (VSSSSE), 280-285 (VSSSSE), 286-291 (VSSSSE), 292-297 (VSSSSE), 298-303 (VSSSSE), 304-309 (VSSSSQ), 317-322 (VSSSSE), 324-329 (VSSSSE), 330-335 (VSSSSE), 336-341 (VSSSSE), 343-348 (VSSSSE), 349-354 (VSSSSE), 355-360 (VSSSSE), 361-366 (VSSSSQ), 374-379 (VSSSSE), 380-385 (VSSSSS), 388-393 (VSSSSE), 394-399 (VSSSSE), 401-406 (VSSSSE), 407-412 (VSSSSE), 413-418 (VSSSSE), 419-424 (VSSSSE), 425-430 (VSSSSE), 431-436 (VSSSSQ), 444-449 (VSSSSE), 450-455 (VSSSSE), 457-462 (VSSSSE), 463-468 (VSSSSE), 469-474 (VSSSSE), 475-480 (VSSSSQ), 488-493 (VSSSSE), 494-500 (VSSSSSE), 502-507 (VSSSSE), 508-513 (VSSSSE), 515-520 (VSSSSE), 521-526 (VSSSSE), 527-532 (VSSSSE), 533-538 (VSSSSQ), 546-551 (VSSSSE), 552-557 (VSSSSS), 560-565 (VSSSSE), 566-571 (VSSSSE), 573-578 (VSSSSE), 579-584 (VSSSSE), 585-590 (VSSSSE), 591-596 (VSSSSQ), 604-609 (VSSSSE), 611-616 (VSSSSE), 617-622 (VSSSSE), 623-628 (VSSSSE), 629-634 (VSSSSE), 635-640 (VSSSSE), 641-646 (VSSSSQ), 654-659 (VSSSSE), 660-665 (VSSSSS), 668-673 (VSSSSE), 674-679 (VSSSSE), 681-686 (VSSSSE), 687-692 (VSSSSE), 693-698 (VSSSSE), 699-704 (VSSSSQ), 712-717 (VSSSSE), 719-724 (VSSSSE), 725-730 (VSSSSE), 731-736 (VSSSSE), 737-742 (VSSSSE), 743-748 (VSSSSE), 749-754 (VSSSSE), 771-776 (VTSSSE), 777-782 (VSSSSQ), and 797-802 (VSSSSE). The segment at 104–541 (VSSSSSEVIS…EVSSSSQVTS (438 aa)) is 88 X 6 AA approximate tandem repeats. The segment at 113 to 833 (SSSSEEASSS…VSSSSASSEV (721 aa)) is disordered. Residue Asn817 is glycosylated (N-linked (GlcNAc...) asparagine). The stretch at 824–829 (VSSSSA) is one 1-88 repeat. Residues Asn994 and Asn1074 are each glycosylated (N-linked (GlcNAc...) asparagine). The GPI-anchor amidated asparagine moiety is linked to residue Asn1382. Residues 1383 to 1404 (AASRQSFNYKFIVGLILAYIIA) constitute a propeptide, removed in mature form.

It localises to the cell membrane. Functionally, predicted GPI-anchored adhesin-like protein which may be involved in filamentous growth and chlamydospore formation. The sequence is that of Probable GPI-anchored adhesin-like protein PGA55 (PGA55) from Candida albicans (strain SC5314 / ATCC MYA-2876) (Yeast).